Consider the following 139-residue polypeptide: Peptide methionine sulfoxide reductase MsrB (139 aa).

The MsrB domain maps to 8–130; that stretch reads DQEWRQQLTD…NSASLRFHSA (123 aa). Zn(2+) is bound by residues cysteine 47, cysteine 50, cysteine 96, and cysteine 99. Cysteine 119 serves as the catalytic Nucleophile.

The protein belongs to the MsrB Met sulfoxide reductase family. The cofactor is Zn(2+).

The enzyme catalyses L-methionyl-[protein] + [thioredoxin]-disulfide + H2O = L-methionyl-(R)-S-oxide-[protein] + [thioredoxin]-dithiol. The chain is Peptide methionine sulfoxide reductase MsrB from Hahella chejuensis (strain KCTC 2396).